The chain runs to 63 residues: Large ribosomal subunit protein bL28 (63 aa).

The protein belongs to the bacterial ribosomal protein bL28 family.

In Clostridium novyi (strain NT), this protein is Large ribosomal subunit protein bL28.